The chain runs to 87 residues: U18-myrmicitoxin-Mri1a (87 aa).

Positions 1-32 (MKNNYNRINTFIVYLMVTFSLISIISITECTP) are cleaved as a signal peptide. One can recognise an EGF-like domain in the interval 33-77 (NHDPCPPQYAEALCLNGGTCFSVTIMGSDNYNCICAPGFRGWRCQ). 3 cysteine pairs are disulfide-bonded: C37-C52, C46-C65, and C67-C76.

Post-translationally, O-glycosylated. Expressed by the venom gland.

The protein resides in the secreted. The sequence is that of U18-myrmicitoxin-Mri1a from Manica rubida (European giant red ant).